A 975-amino-acid polypeptide reads, in one-letter code: Exportin-2 (975 aa).

An Importin N-terminal domain is found at alanine 29–histidine 105.

This sequence belongs to the XPO2/CSE1 family. As to quaternary structure, binds with high affinity to importin-alpha only in the presence of RanGTP.

The protein localises to the cytoplasm. It is found in the nucleus. In terms of biological role, export receptor for importin alpha. Mediates importin-alpha re-export from the nucleus to the cytoplasm after import substrates have been released into the nucleoplasm. The polypeptide is Exportin-2 (Drosophila melanogaster (Fruit fly)).